The chain runs to 231 residues: Cytochrome c oxidase assembly factor 7A (231 aa).

5 Sel1-like repeats span residues P34 to E66, S68 to G104, I108 to F145, A146 to H182, and V183 to K218.

This sequence belongs to the hcp beta-lactamase family.

The protein resides in the mitochondrion intermembrane space. Functionally, may be required for assembly of mitochondrial respiratory chain complexes. This chain is Cytochrome c oxidase assembly factor 7A (coa7-a), found in Xenopus laevis (African clawed frog).